A 224-amino-acid chain; its full sequence is Flagellar L-ring protein (224 aa).

An N-terminal signal peptide occupies residues 1 to 15 (MARYFILAAALLLTA). Cys-16 is lipidated: N-palmitoyl cysteine. Cys-16 carries the S-diacylglycerol cysteine lipid modification.

This sequence belongs to the FlgH family. The basal body constitutes a major portion of the flagellar organelle and consists of four rings (L,P,S, and M) mounted on a central rod.

It is found in the cell outer membrane. The protein localises to the bacterial flagellum basal body. In terms of biological role, assembles around the rod to form the L-ring and probably protects the motor/basal body from shearing forces during rotation. This chain is Flagellar L-ring protein, found in Shewanella sp. (strain MR-4).